Consider the following 236-residue polypeptide: Phosphoribosylaminoimidazole-succinocarboxamide synthase (236 aa).

This sequence belongs to the SAICAR synthetase family.

It carries out the reaction 5-amino-1-(5-phospho-D-ribosyl)imidazole-4-carboxylate + L-aspartate + ATP = (2S)-2-[5-amino-1-(5-phospho-beta-D-ribosyl)imidazole-4-carboxamido]succinate + ADP + phosphate + 2 H(+). It functions in the pathway purine metabolism; IMP biosynthesis via de novo pathway; 5-amino-1-(5-phospho-D-ribosyl)imidazole-4-carboxamide from 5-amino-1-(5-phospho-D-ribosyl)imidazole-4-carboxylate: step 1/2. The protein is Phosphoribosylaminoimidazole-succinocarboxamide synthase of Campylobacter jejuni (strain RM1221).